We begin with the raw amino-acid sequence, 330 residues long: Probable cytosolic iron-sulfur protein assembly protein 1 (330 aa).

WD repeat units follow at residues 12 to 49 (LYKE…FTLI), 56 to 95 (AHKK…DRTF), 105 to 144 (GHEN…EEYE), 151 to 190 (EHSQ…WECV), 195 to 236 (GHEG…EDDQ), 248 to 286 (VHKR…WKVF), and 292 to 330 (CHGV…EKAA).

Belongs to the WD repeat CIA1 family. As to quaternary structure, interacts with NAR1.

The protein localises to the cytoplasm. The protein resides in the nucleus. Functionally, essential component of the cytosolic iron-sulfur (Fe/S) protein assembly machinery. Required for the maturation of extramitochondrial Fe/S proteins. This Saccharomyces cerevisiae (strain YJM789) (Baker's yeast) protein is Probable cytosolic iron-sulfur protein assembly protein 1.